The following is a 578-amino-acid chain: Putative diflavin flavoprotein A 2 (578 aa).

A zinc metallo-hydrolase region spans residues 39–233 (QQGTTSNSYL…PPPRLYAPAH (195 aa)). The Flavodoxin-like domain occupies 262–404 (VALFYASAYG…AANEFAQALK (143 aa)). The tract at residues 429–578 (VNRVVGSLCV…TAIQHRKTSS (150 aa)) is flavodoxin-reductase-like.

The protein in the N-terminal section; belongs to the zinc metallo-hydrolase group 3 family. This sequence in the C-terminal section; belongs to the flavodoxin reductase family. Fe cation is required as a cofactor.

Mediates electron transfer from NADH to oxygen, reducing it to water. This modular protein has 3 redox cofactors, in other organisms the same activity requires 2 or 3 proteins. The protein is Putative diflavin flavoprotein A 2 (dfa2) of Thermosynechococcus vestitus (strain NIES-2133 / IAM M-273 / BP-1).